A 402-amino-acid polypeptide reads, in one-letter code: NADH-quinone oxidoreductase subunit D (402 aa).

It belongs to the complex I 49 kDa subunit family. As to quaternary structure, NDH-1 is composed of 14 different subunits. Subunits NuoB, C, D, E, F, and G constitute the peripheral sector of the complex.

Its subcellular location is the cell inner membrane. It catalyses the reaction a quinone + NADH + 5 H(+)(in) = a quinol + NAD(+) + 4 H(+)(out). NDH-1 shuttles electrons from NADH, via FMN and iron-sulfur (Fe-S) centers, to quinones in the respiratory chain. The immediate electron acceptor for the enzyme in this species is believed to be ubiquinone. Couples the redox reaction to proton translocation (for every two electrons transferred, four hydrogen ions are translocated across the cytoplasmic membrane), and thus conserves the redox energy in a proton gradient. This is NADH-quinone oxidoreductase subunit D from Rhodopseudomonas palustris (strain TIE-1).